A 341-amino-acid chain; its full sequence is Glyceraldehyde-3-phosphate dehydrogenase 3 (341 aa).

Residues 13–14 (RI), D35, and R85 each bind NAD(+). Residues 157–159 (SCT), T188, 217–218 (TG), and R240 contribute to the D-glyceraldehyde 3-phosphate site. The Nucleophile role is filled by C158. N322 is a binding site for NAD(+).

It belongs to the glyceraldehyde-3-phosphate dehydrogenase family. As to quaternary structure, homotetramer.

The protein localises to the cytoplasm. It catalyses the reaction D-glyceraldehyde 3-phosphate + phosphate + NAD(+) = (2R)-3-phospho-glyceroyl phosphate + NADH + H(+). It participates in carbohydrate degradation; glycolysis; pyruvate from D-glyceraldehyde 3-phosphate: step 1/5. This chain is Glyceraldehyde-3-phosphate dehydrogenase 3 (gpd-3), found in Caenorhabditis elegans.